Here is a 274-residue protein sequence, read N- to C-terminus: Ribosomal RNA small subunit methyltransferase A (274 aa).

S-adenosyl-L-methionine contacts are provided by His-15, Leu-17, Gly-42, Glu-64, Asp-89, and Asn-108.

The protein belongs to the class I-like SAM-binding methyltransferase superfamily. rRNA adenine N(6)-methyltransferase family. RsmA subfamily.

Its subcellular location is the cytoplasm. It carries out the reaction adenosine(1518)/adenosine(1519) in 16S rRNA + 4 S-adenosyl-L-methionine = N(6)-dimethyladenosine(1518)/N(6)-dimethyladenosine(1519) in 16S rRNA + 4 S-adenosyl-L-homocysteine + 4 H(+). Specifically dimethylates two adjacent adenosines (A1518 and A1519) in the loop of a conserved hairpin near the 3'-end of 16S rRNA in the 30S particle. May play a critical role in biogenesis of 30S subunits. The protein is Ribosomal RNA small subunit methyltransferase A of Prochlorococcus marinus (strain MIT 9215).